The sequence spans 276 residues: Bifunctional protein FolD (276 aa).

Residues 157–159 (NRS), Ser182, and Ile223 each bind NADP(+).

This sequence belongs to the tetrahydrofolate dehydrogenase/cyclohydrolase family. In terms of assembly, homodimer.

The catalysed reaction is (6R)-5,10-methylene-5,6,7,8-tetrahydrofolate + NADP(+) = (6R)-5,10-methenyltetrahydrofolate + NADPH. It carries out the reaction (6R)-5,10-methenyltetrahydrofolate + H2O = (6R)-10-formyltetrahydrofolate + H(+). It participates in one-carbon metabolism; tetrahydrofolate interconversion. Catalyzes the oxidation of 5,10-methylenetetrahydrofolate to 5,10-methenyltetrahydrofolate and then the hydrolysis of 5,10-methenyltetrahydrofolate to 10-formyltetrahydrofolate. This Thermoplasma acidophilum (strain ATCC 25905 / DSM 1728 / JCM 9062 / NBRC 15155 / AMRC-C165) protein is Bifunctional protein FolD.